A 720-amino-acid polypeptide reads, in one-letter code: Catalase-peroxidase (720 aa).

Positions 94–222 (WHAAGTYRIA…LAAVTMGLIY (129 aa)) form a cross-link, tryptophyl-tyrosyl-methioninium (Trp-Tyr) (with M-248). Histidine 95 acts as the Proton acceptor in catalysis. Residues 222-248 (YVNPEGVDGNPDPLKTAHDVRVTFARM) constitute a cross-link (tryptophyl-tyrosyl-methioninium (Tyr-Met) (with W-94)). Histidine 263 is a heme b binding site.

This sequence belongs to the peroxidase family. Peroxidase/catalase subfamily. In terms of assembly, homodimer. Heme b is required as a cofactor. In terms of processing, formation of the three residue Trp-Tyr-Met cross-link is important for the catalase, but not the peroxidase activity of the enzyme.

It catalyses the reaction H2O2 + AH2 = A + 2 H2O. The enzyme catalyses 2 H2O2 = O2 + 2 H2O. Functionally, bifunctional enzyme with both catalase and broad-spectrum peroxidase activity. The sequence is that of Catalase-peroxidase from Synechococcus elongatus (strain ATCC 33912 / PCC 7942 / FACHB-805) (Anacystis nidulans R2).